The primary structure comprises 340 residues: MEQTLVIQKKKGFGFSQGIGITLLIAIAAKYLAELPFLNIMGQLVIAILIGMVWRAAIGVPHDAIAGTNFASKKLLRFGIILLGMRLNLVDIAKAGPKVLVIAAVVITFTIFVVYGLTKVFKVEKKLGILTACGTAICGAAAVVAIAPQVKAKDDETAVGAAIIAILGTIFTLIYTLLYPVLGLSPYGYGVFSGATLHEIAHVIAAAAPGGSTAVDIAVIVKLTRVAMLVPVAILIGLWFGKSEGSEGKRSWRELPIPWFIFGFLAMSAVHSLGIIPEVVAGYIVVLAYMLIAMAMAGLGLNVEFKTFRKLGSKAFVAGLIGSVCLSVLGYVLVYALGFM.

The next 10 helical transmembrane spans lie at 13–35 (FGFSQGIGITLLIAIAAKYLAEL), 40–59 (IMGQLVIAILIGMVWRAAIG), 99–118 (VLVIAAVVITFTIFVVYGLT), 128–150 (GILTACGTAICGAAAVVAIAPQV), 157–179 (TAVGAAIIAILGTIFTLIYTLLY), 189–211 (YGVFSGATLHEIAHVIAAAAPGG), 218–240 (AVIVKLTRVAMLVPVAILIGLWF), 255–277 (LPIPWFIFGFLAMSAVHSLGIIP), 279–301 (VVAGYIVVLAYMLIAMAMAGLGL), and 316–338 (FVAGLIGSVCLSVLGYVLVYALG).

This sequence belongs to the UPF0324 family.

The protein resides in the cell membrane. The protein is UPF0324 membrane protein BC_5174 of Bacillus cereus (strain ATCC 14579 / DSM 31 / CCUG 7414 / JCM 2152 / NBRC 15305 / NCIMB 9373 / NCTC 2599 / NRRL B-3711).